Here is a 579-residue protein sequence, read N- to C-terminus: ATP-dependent lipid A-core flippase (579 aa).

Transmembrane regions (helical) follow at residues Phe24–Leu44, Trp63–Thr83, Val150–Ala170, Val251–Ala271, and Thr275–Leu295. The ABC transmembrane type-1 domain occupies Ala25–Arg307. Residues Leu339 to Leu575 enclose the ABC transporter domain. Gly373–Thr380 is a binding site for ATP.

The protein belongs to the ABC transporter superfamily. Lipid exporter (TC 3.A.1.106) family. In terms of assembly, homodimer.

Its subcellular location is the cell inner membrane. The enzyme catalyses ATP + H2O + lipid A-core oligosaccharideSide 1 = ADP + phosphate + lipid A-core oligosaccharideSide 2.. In terms of biological role, involved in lipopolysaccharide (LPS) biosynthesis. Translocates lipid A-core from the inner to the outer leaflet of the inner membrane. Transmembrane domains (TMD) form a pore in the inner membrane and the ATP-binding domain (NBD) is responsible for energy generation. The sequence is that of ATP-dependent lipid A-core flippase from Thiobacillus denitrificans (strain ATCC 25259 / T1).